The chain runs to 319 residues: Protein sprouty homolog 1 (319 aa).

Met-1 carries the N-acetylmethionine modification. Residues 54-160 (TEGPSVVKRP…ERAIRTQPKQ (107 aa)) are disordered. Over residues 69–79 (PRQEKHERTHE) the composition is skewed to basic and acidic residues. The segment covering 112-131 (SRSTSTGSAASSGSNSSASS) has biased composition (low complexity). Residues 183 to 295 (QCGKCKCGEC…CYDWIHRPGC (113 aa)) enclose the SPR domain.

The protein belongs to the sprouty family. As to quaternary structure, forms heterodimers with SPRY2. Interacts with TESK1. Interacts with CAV1 (via C-terminus).

It localises to the cytoplasm. The protein resides in the membrane. Inhibits fibroblast growth factor (FGF)-induced retinal lens fiber differentiation, probably by inhibiting FGF-mediated phosphorylation of ERK1/2. Inhibits TGFB-induced epithelial-to-mesenchymal transition in lens epithelial cells. This is Protein sprouty homolog 1 (SPRY1) from Cervus elaphus (Red deer).